A 104-amino-acid chain; its full sequence is Large ribosomal subunit protein uL24 (104 aa).

The interval 82–104 (RVGYRFDENGKKVRVSRRNGKDI) is disordered. Residues 93-104 (KVRVSRRNGKDI) are compositionally biased toward basic residues.

The protein belongs to the universal ribosomal protein uL24 family. In terms of assembly, part of the 50S ribosomal subunit.

One of two assembly initiator proteins, it binds directly to the 5'-end of the 23S rRNA, where it nucleates assembly of the 50S subunit. Its function is as follows. One of the proteins that surrounds the polypeptide exit tunnel on the outside of the subunit. This Corynebacterium glutamicum (strain R) protein is Large ribosomal subunit protein uL24.